The following is a 1011-amino-acid chain: DNA-directed RNA polymerase subunit beta'' (1011 aa).

The Zn(2+) site is built by Cys216, Cys282, Cys288, and Cys291.

Belongs to the RNA polymerase beta' chain family. RpoC2 subfamily. In terms of assembly, in plastids the minimal PEP RNA polymerase catalytic core is composed of four subunits: alpha, beta, beta', and beta''. When a (nuclear-encoded) sigma factor is associated with the core the holoenzyme is formed, which can initiate transcription. Zn(2+) is required as a cofactor.

Its subcellular location is the plastid. The protein localises to the chloroplast. It catalyses the reaction RNA(n) + a ribonucleoside 5'-triphosphate = RNA(n+1) + diphosphate. Its function is as follows. DNA-dependent RNA polymerase catalyzes the transcription of DNA into RNA using the four ribonucleoside triphosphates as substrates. This is DNA-directed RNA polymerase subunit beta'' from Ostreococcus tauri.